The chain runs to 278 residues: Ankyrin repeat and SOCS box protein 13 (278 aa).

6 ANK repeats span residues 18 to 47 (VERT…CVNQ), 51 to 80 (DSIT…QVDA), 84 to 113 (DGST…KVNP), 116 to 145 (YTAS…NLEA), 149 to 178 (HFGT…NVNA), and 181 to 210 (LHET…NIYA). An SOCS box domain is found at 229–278 (AKCFEYYEKTPLTLSQLCRVNLRKATGVRGLEKIAKLNIPPRLIDYLSYN).

It belongs to the ankyrin SOCS box (ASB) family.

Its pathway is protein modification; protein ubiquitination. Functionally, may be a substrate-recognition component of a SCF-like ECS (Elongin-Cullin-SOCS-box protein) E3 ubiquitin-protein ligase complex which mediates the ubiquitination and subsequent proteasomal degradation of target proteins. The protein is Ankyrin repeat and SOCS box protein 13 (ASB13) of Homo sapiens (Human).